The primary structure comprises 418 residues: MIHSLFLINCSGDIFLEKHWKSVVSQSVCDYFFEAQEKAADVENVPPVISTPHHYLISIYRDKLFFVSVIQTEVPPLFVIEFLHRVADTFQDYFGECSEAAIKDNVVIVYELLEEMLDNGFPLATESNILKELIKPPTILRSVVNSITGSSNVGDTLPTGQLSNIPWRRAGVKYTNNEAYFDVVEEIDAIIDKSGSTVFAEIQGVIDACIKLSGMPDLSLSFMNPRLLDDVSFHPCIRFKRWESERVLSFIPPDGNFRLISYRVSSQNLVAIPVYVKHSISFKENSSCGRFDITIGPKQNMGKTIEGITVTVHMPKVVLNMNLTPTQGSYTFDPVTKVLTWDVGKITPQKLPSLKGLVNLQSGAPKPEENPSLNIQFKIQQLAISGLKVNRLDMYGEKYKPFKGVKYVTKAGKFQVRT.

The region spanning 176-417 (NNEAYFDVVE…VTKAGKFQVR (242 aa)) is the MHD domain.

The protein belongs to the adaptor complexes medium subunit family. In terms of assembly, adaptor protein complex 3 (AP-3) is a heterotetramer composed of two large adaptins (delta-type subunit AP3D1 and beta-type subunit AP3B1 or AP3B2), a medium adaptin (mu-type subunit AP3M1 or AP3M2) and a small adaptin (sigma-type subunit APS1 or AP3S2). Interacts with AGAP1. AP-3 associates with the BLOC-1 complex. As to quaternary structure, (Microbial infection) Interacts with human respiratory virus (HRSV) matrix protein; this interaction plays an essential role in trafficking the matrix protein in host cells.

Its subcellular location is the golgi apparatus. It is found in the cytoplasmic vesicle membrane. Its function is as follows. Part of the AP-3 complex, an adaptor-related complex which is not clathrin-associated. The complex is associated with the Golgi region as well as more peripheral structures. It facilitates the budding of vesicles from the Golgi membrane and may be directly involved in trafficking to lysosomes. In concert with the BLOC-1 complex, AP-3 is required to target cargos into vesicles assembled at cell bodies for delivery into neurites and nerve terminals. In Homo sapiens (Human), this protein is AP-3 complex subunit mu-1 (AP3M1).